Here is an 860-residue protein sequence, read N- to C-terminus: Leucine--tRNA ligase (860 aa).

A 'HIGH' region motif is present at residues 42 to 52 (PYPSGRLHMGH). The 'KMSKS' region motif lies at 619 to 623 (KMSKS). An ATP-binding site is contributed by lysine 622.

This sequence belongs to the class-I aminoacyl-tRNA synthetase family.

Its subcellular location is the cytoplasm. It carries out the reaction tRNA(Leu) + L-leucine + ATP = L-leucyl-tRNA(Leu) + AMP + diphosphate. The protein is Leucine--tRNA ligase of Escherichia coli O157:H7.